Reading from the N-terminus, the 104-residue chain is Translation initiation factor 1A (104 aa).

A compositionally biased stretch (low complexity) spans 1–14 (MRGQQAPPQQPTRV). The disordered stretch occupies residues 1-20 (MRGQQAPPQQPTRVRTPREN). Positions 12–87 (TRVRTPRENE…EKCDVIWRYT (76 aa)) constitute an S1-like domain.

It belongs to the eIF-1A family.

Its function is as follows. Seems to be required for maximal rate of protein biosynthesis. Enhances ribosome dissociation into subunits and stabilizes the binding of the initiator Met-tRNA(I) to 40 S ribosomal subunits. The polypeptide is Translation initiation factor 1A (eIF1A) (Methanococcus maripaludis (strain C6 / ATCC BAA-1332)).